We begin with the raw amino-acid sequence, 109 residues long: MFMFFINIIFINNFLNNYKTYIIYIYIYNKWNNYNKNYNYNYIMIMITMGLNITCEQTVMFNPYYYLLYYMYIKMLMLMLMLYYIMLYYIMLYYIMFMIMLYYMIYMTL.

It localises to the mitochondrion. This is an uncharacterized protein from Saccharomyces cerevisiae (strain ATCC 204508 / S288c) (Baker's yeast).